The following is a 1326-amino-acid chain: Putative late blight resistance protein homolog R1B-19 (1326 aa).

Coiled-coil stretches lie at residues 421 to 444 (RYSD…ESLQ) and 536 to 558 (PRMK…KLLN). ATP is bound at residue 570 to 577 (GMPGLGKT). Residues 611–864 (LLSLLCDTIG…KVKTCRLHDV (254 aa)) enclose the NB-ARC domain. The stretch at 749 to 770 (SEMEKEVECWEQVANNLGTRIH) forms a coiled coil. LRR repeat units follow at residues 953-978 (FKFL…VYLK), 980-996 (FSAH…IYNL), 1027-1050 (LRHL…SAKL), 1053-1070 (LETL…LNFP), 1071-1094 (IRLE…ISAP), 1098-1118 (YLKL…ADHL), 1119-1146 (KNLE…MFPQ), 1167-1191 (FPNL…AMNI), and 1208-1230 (LIEK…AFKR). Residues 1209–1278 (IEKKTLKLNL…AWHARVVVPT (70 aa)) form the HMA domain.

It belongs to the disease resistance NB-LRR family.

It localises to the cytoplasm. The protein localises to the membrane. Its function is as follows. Confers resistance to late blight (Phytophthora infestans) races carrying the avirulence gene Avr1. Resistance proteins guard the plant against pathogens that contain an appropriate avirulence protein via an indirect interaction with this avirulence protein. That triggers a defense system including the hypersensitive response, which restricts the pathogen growth. The polypeptide is Putative late blight resistance protein homolog R1B-19 (R1B-19) (Solanum demissum (Wild potato)).